The chain runs to 95 residues: Protein TusB (95 aa).

Belongs to the DsrH/TusB family. Heterohexamer, formed by a dimer of trimers. The hexameric TusBCD complex contains 2 copies each of TusB, TusC and TusD. The TusBCD complex interacts with TusE.

The protein localises to the cytoplasm. Its function is as follows. Part of a sulfur-relay system required for 2-thiolation of 5-methylaminomethyl-2-thiouridine (mnm(5)s(2)U) at tRNA wobble positions. The sequence is that of Protein TusB from Shigella dysenteriae serotype 1 (strain Sd197).